A 518-amino-acid polypeptide reads, in one-letter code: Chaperonin GroEL (518 aa).

ATP is bound by residues 30–33 (TLGP), Lys-51, 87–91 (DGTTT), and Gly-415.

The protein belongs to the chaperonin (HSP60) family. As to quaternary structure, forms a cylinder of 14 subunits composed of two heptameric rings stacked back-to-back. Interacts with the co-chaperonin GroES.

The protein resides in the cytoplasm. The catalysed reaction is ATP + H2O + a folded polypeptide = ADP + phosphate + an unfolded polypeptide.. Together with its co-chaperonin GroES, plays an essential role in assisting protein folding. The GroEL-GroES system forms a nano-cage that allows encapsulation of the non-native substrate proteins and provides a physical environment optimized to promote and accelerate protein folding. The chain is Chaperonin GroEL from Desulfotalea psychrophila (strain LSv54 / DSM 12343).